The sequence spans 82 residues: Beta-defensin 119 (82 aa).

The first 19 residues, methionine 1–glycine 19, serve as a signal peptide directing secretion. Cystine bridges form between cysteine 26–cysteine 53, cysteine 33–cysteine 47, and cysteine 37–cysteine 54.

It belongs to the beta-defensin family.

It localises to the secreted. Functionally, has antibacterial activity. The sequence is that of Beta-defensin 119 (DEFB119) from Canis lupus familiaris (Dog).